Consider the following 149-residue polypeptide: D-aminoacyl-tRNA deacylase (149 aa).

Residues 137-138 (GP) carry the Gly-cisPro motif, important for rejection of L-amino acids motif.

The protein belongs to the DTD family. As to quaternary structure, homodimer.

It localises to the cytoplasm. The enzyme catalyses glycyl-tRNA(Ala) + H2O = tRNA(Ala) + glycine + H(+). It carries out the reaction a D-aminoacyl-tRNA + H2O = a tRNA + a D-alpha-amino acid + H(+). Functionally, an aminoacyl-tRNA editing enzyme that deacylates mischarged D-aminoacyl-tRNAs. Also deacylates mischarged glycyl-tRNA(Ala), protecting cells against glycine mischarging by AlaRS. Acts via tRNA-based rather than protein-based catalysis; rejects L-amino acids rather than detecting D-amino acids in the active site. By recycling D-aminoacyl-tRNA to D-amino acids and free tRNA molecules, this enzyme counteracts the toxicity associated with the formation of D-aminoacyl-tRNA entities in vivo and helps enforce protein L-homochirality. This is D-aminoacyl-tRNA deacylase from Thermoanaerobacter pseudethanolicus (strain ATCC 33223 / 39E) (Clostridium thermohydrosulfuricum).